The sequence spans 634 residues: Threonine--tRNA ligase (634 aa).

In terms of domain architecture, TGS spans 1–61 (MFEVKLKDGS…DSDCEVQFVK (61 aa)). A catalytic region spans residues 242-532 (DHRKIGKEMG…LIEHYAGKFP (291 aa)). Residues Cys-333, His-384, and His-509 each contribute to the Zn(2+) site.

It belongs to the class-II aminoacyl-tRNA synthetase family. As to quaternary structure, homodimer. Zn(2+) is required as a cofactor.

Its subcellular location is the cytoplasm. It catalyses the reaction tRNA(Thr) + L-threonine + ATP = L-threonyl-tRNA(Thr) + AMP + diphosphate + H(+). In terms of biological role, catalyzes the attachment of threonine to tRNA(Thr) in a two-step reaction: L-threonine is first activated by ATP to form Thr-AMP and then transferred to the acceptor end of tRNA(Thr). Also edits incorrectly charged L-seryl-tRNA(Thr). The chain is Threonine--tRNA ligase from Finegoldia magna (strain ATCC 29328 / DSM 20472 / WAL 2508) (Peptostreptococcus magnus).